The primary structure comprises 277 residues: 3-methyl-2-oxobutanoate hydroxymethyltransferase (277 aa).

The Mg(2+) site is built by Asp-43 and Asp-82. Residues 43-44 (DS), Asp-82, and Lys-112 contribute to the 3-methyl-2-oxobutanoate site. Position 114 (Glu-114) interacts with Mg(2+). Glu-181 acts as the Proton acceptor in catalysis.

The protein belongs to the PanB family. As to quaternary structure, homodecamer; pentamer of dimers. Mg(2+) serves as cofactor.

Its subcellular location is the cytoplasm. The enzyme catalyses 3-methyl-2-oxobutanoate + (6R)-5,10-methylene-5,6,7,8-tetrahydrofolate + H2O = 2-dehydropantoate + (6S)-5,6,7,8-tetrahydrofolate. Its pathway is cofactor biosynthesis; (R)-pantothenate biosynthesis; (R)-pantoate from 3-methyl-2-oxobutanoate: step 1/2. In terms of biological role, catalyzes the reversible reaction in which hydroxymethyl group from 5,10-methylenetetrahydrofolate is transferred onto alpha-ketoisovalerate to form ketopantoate. The sequence is that of 3-methyl-2-oxobutanoate hydroxymethyltransferase from Listeria monocytogenes serotype 4a (strain HCC23).